The sequence spans 365 residues: Eukaryotic translation initiation factor 3 subunit H (365 aa).

An MPN domain is found at 11–160; sequence VQVEALVVMK…LRAFRLSPQF (150 aa). Residues 273–303 are a coiled coil; sequence YQRSLAREQTKIAAWQAKRKAENATRAQLKQ.

It belongs to the eIF-3 subunit H family. Component of the eukaryotic translation initiation factor 3 (eIF-3) complex.

The protein resides in the cytoplasm. In terms of biological role, component of the eukaryotic translation initiation factor 3 (eIF-3) complex, which is involved in protein synthesis of a specialized repertoire of mRNAs and, together with other initiation factors, stimulates binding of mRNA and methionyl-tRNAi to the 40S ribosome. The eIF-3 complex specifically targets and initiates translation of a subset of mRNAs involved in cell proliferation. This Coccidioides immitis (strain RS) (Valley fever fungus) protein is Eukaryotic translation initiation factor 3 subunit H.